Reading from the N-terminus, the 851-residue chain is MAKPLTDQEKRRQISIRGIVGVENVAELKKGFNRHLHFTLVKDRNVATPRDYFFALAHTVRDHLVGRWIRTQQYYYEKCPKRVYYLSLEFYMGRTLQNTMINLGLQNACDEAIYQLGLDMEELEEIEEDAGLGNGGLGRLAACFLDSMATLGLAAYGYGIRYEYGIFNQKIRDGWQIEEADDWLRHGNPWEKARPEFMLPVHFYGRVEHTEAGTKWIDTQVVLALPYDTPVPGYLNNTVNTMRLWSARAPNDFNLRDFNVGDYIQAVLDRNLAENISRVLYPNDNFFEGKELRLKQEYFVVAATLQDVIRRFKASKFDSSNSAETAFDAFPDQVAIQLNDTHPALAIPELMRIFVDIEKLPWSKAWEITQKTFAYTNHTVLPEALERWPVELVENLLPRHLQIIYEINQKHLDKIAALFPKDVDRLRRMSLIEEEGVKRINMAHLCIVGSHAVNGVAKIHSDIVKTQVFKDFSELEPDKFQNKTNGITPRRWLLLCNPGLAELIAEKIGEDYVKDLSQLTKLNSFLGDDIFLREISNVKQENKLKFSQFLEKEYKVKINPSSMFDVQVKRIHEYKRQLLNCLHVVTMYNRIKKDPKKLFVPRTVIIGGKAAPGYYMAKLIIKLITSVAEVVNNDPMVGSKLKLIFLENYRVSLAEKVIPATDLSEQISTAGTEASGTGNMKFMQNGALTIGTMDGANVEMAEEAGEENLFIFGMRVEDVAALDKKGYEAKEYYEALPELKLAIDQIDKGFFSPKQPDLFKDLVNMLFYHDRFKVFADYEAYVKCQEKVSQLYMNPKAWNIMVLKNIAASGKFSSDRTIKEYARDIWNMEPSDIKISLSGEPSGGANKANGK.

Ala-2 bears the N-acetylalanine mark. Ser-15 is modified (phosphoserine; by PHK; in form phosphorylase a). Residues 43–45 (DRN), Tyr-76, and Arg-310 contribute to the AMP site. Lys-364 is subject to N6-succinyllysine. At Lys-470 the chain carries N6-acetyllysine. Phosphoserine occurs at positions 524, 561, and 639. The residue at position 681 (Lys-681) is an N6-(pyridoxal phosphate)lysine. At Lys-796 the chain carries N6-acetyllysine.

The protein belongs to the glycogen phosphorylase family. As to quaternary structure, homodimer; enzymatically active. Interacts with PPP1R3B; recruits the phosphatase PP1 which dephosphorylates and inactivates PYGL/glycogen phosphorylase. Pyridoxal 5'-phosphate serves as cofactor. In terms of processing, acetylation, which is up-regulated by glucose and insulin and down-regulated by glucagon, inhibits the glycogen phosphorylase activity by promoting PPP1R3B-mediated recruitment of phosphatase PP1 and Ser-15 dephosphorylation. Post-translationally, phosphorylation at Ser-15 converts inactive phosphorylase b into active phosphorylase a. Dephosphorylation of Ser-15 by phosphatase PP1 inactivates the enzyme.

It is found in the cytoplasm. It localises to the cytosol. It catalyses the reaction [(1-&gt;4)-alpha-D-glucosyl](n) + phosphate = [(1-&gt;4)-alpha-D-glucosyl](n-1) + alpha-D-glucose 1-phosphate. With respect to regulation, allosterically regulated through the non-covalent binding of metabolites, being activated by AMP and inhibited by ATP, ADP, and glucose-6-phosphate. The activity is also controlled by post-translational modifications including phosphorylation and acetylation. Allosteric enzyme that catalyzes the rate-limiting step in glycogen catabolism, the phosphorolytic cleavage of glycogen to produce glucose-1-phosphate, and plays a central role in maintaining cellular and organismal glucose homeostasis. This is Glycogen phosphorylase, liver form from Ovis aries (Sheep).